The primary structure comprises 76 residues: MQKLTILLLVAAVLMSTQALIKGGGEKRPKEKIKFLSKRRTNAERWWEGDCTGWLDGCTSPAECCTAVCDATCKLW.

Residues 1-19 (MQKLTILLLVAAVLMSTQA) form the signal peptide. Residues 20–37 (LIKGGGEKRPKEKIKFLS) constitute a propeptide that is removed on maturation. Intrachain disulfides connect cysteine 51/cysteine 65, cysteine 58/cysteine 69, and cysteine 64/cysteine 73.

Belongs to the conotoxin O2 superfamily. In terms of tissue distribution, expressed by the venom duct.

It is found in the secreted. This Conus ventricosus (Mediterranean cone) protein is Conotoxin VnMEKL-021.